Reading from the N-terminus, the 563-residue chain is Protein NRT1/ PTR FAMILY 5.9 (563 aa).

Residues 56-76 (TWAGFTSMLPLFSAPLADTYW) traverse the membrane as a helical segment. Thr81 bears the Phosphothreonine mark. 10 consecutive transmembrane segments (helical) span residues 82–102 (ILAS…TAFA), 110–130 (TISS…LGVL), 168–188 (FFQL…TVMA), 194–214 (FGWV…ILVF), 317–337 (FPIW…ATFF), 362–382 (TITL…IPIT), 394–414 (VMER…IAAI), 441–461 (IFWL…TVVG), 479–499 (FALY…LISI), and 528–548 (WLLA…CKFF).

The protein belongs to the major facilitator superfamily. Proton-dependent oligopeptide transporter (POT/PTR) (TC 2.A.17) family. Expressed in roots and flowers.

Its subcellular location is the membrane. The polypeptide is Protein NRT1/ PTR FAMILY 5.9 (NPF5.9) (Arabidopsis thaliana (Mouse-ear cress)).